The sequence spans 39 residues: Bacteriocin E50-52 (39 aa).

Its subcellular location is the secreted. In terms of biological role, bacteriocin active against the Gram-negative bacteria C.jejuni, Y.enterocolitica and Y.pseudotuberculosis, and the Gram-positive bacteria S.aureus, S.epidermidis, L.monocytogenes and Listeria spp. When added to the drinking water of chickens, causes a decrease in the levels of C.jejuni and S.enteritidis in the ceca, and in the levels of S.enteritidis in the liver and spleen. The chain is Bacteriocin E50-52 from Enterococcus faecium (Streptococcus faecium).